A 369-amino-acid chain; its full sequence is Anhydro-N-acetylmuramic acid kinase (369 aa).

12–19 (GTSLDGVD) contacts ATP.

This sequence belongs to the anhydro-N-acetylmuramic acid kinase family.

The catalysed reaction is 1,6-anhydro-N-acetyl-beta-muramate + ATP + H2O = N-acetyl-D-muramate 6-phosphate + ADP + H(+). Its pathway is amino-sugar metabolism; 1,6-anhydro-N-acetylmuramate degradation. The protein operates within cell wall biogenesis; peptidoglycan recycling. Catalyzes the specific phosphorylation of 1,6-anhydro-N-acetylmuramic acid (anhMurNAc) with the simultaneous cleavage of the 1,6-anhydro ring, generating MurNAc-6-P. Is required for the utilization of anhMurNAc either imported from the medium or derived from its own cell wall murein, and thus plays a role in cell wall recycling. This chain is Anhydro-N-acetylmuramic acid kinase, found in Escherichia coli O1:K1 / APEC.